A 284-amino-acid polypeptide reads, in one-letter code: MQQKTISLGNIDIANDKPFVLFGGMNVLESRDMAMQVCEKYVEVTQRLGVPYVFKASFDKANRSSIHSYRGPGMEEGLKIFQELKDTFGVKIITDVHEIYQCQPVAEVVDIIQLPAFLARQTDLVEAMARTGAVINVKKPQFLSPGQMGNIVEKIEECGNDKVILCDRGTNFGYDNLVVDMLGFNVMKKVSKGCPVIFDVTHSLQCRDPFGAASGGRRDQVTKLARAGMAIGLAGLFLEAHPDPNKAKCDGPSALPLSKLEAFVSQMKAIDDLVKSFEEIDTSN.

It belongs to the KdsA family.

It is found in the cytoplasm. The catalysed reaction is D-arabinose 5-phosphate + phosphoenolpyruvate + H2O = 3-deoxy-alpha-D-manno-2-octulosonate-8-phosphate + phosphate. It participates in carbohydrate biosynthesis; 3-deoxy-D-manno-octulosonate biosynthesis; 3-deoxy-D-manno-octulosonate from D-ribulose 5-phosphate: step 2/3. The protein operates within bacterial outer membrane biogenesis; lipopolysaccharide biosynthesis. The polypeptide is 2-dehydro-3-deoxyphosphooctonate aldolase (Glaesserella parasuis serovar 5 (strain SH0165) (Haemophilus parasuis)).